The following is a 438-amino-acid chain: Ribosomal protein uS12 methylthiotransferase RimO (438 aa).

Residues 1–116 (MNVGFISLGC…IWKEIENLLD (116 aa)) enclose the MTTase N-terminal domain. Residues Cys10, Cys46, Cys79, Cys147, Cys151, and Cys154 each contribute to the [4Fe-4S] cluster site. The 231-residue stretch at 133–363 (TTGSNMAYLK…MALQEKISRE (231 aa)) folds into the Radical SAM core domain. One can recognise a TRAM domain in the interval 366–435 (EQKVGNVYKV…DYDLFGELYT (70 aa)).

Belongs to the methylthiotransferase family. RimO subfamily. The cofactor is [4Fe-4S] cluster.

It localises to the cytoplasm. The enzyme catalyses L-aspartate(89)-[ribosomal protein uS12]-hydrogen + (sulfur carrier)-SH + AH2 + 2 S-adenosyl-L-methionine = 3-methylsulfanyl-L-aspartate(89)-[ribosomal protein uS12]-hydrogen + (sulfur carrier)-H + 5'-deoxyadenosine + L-methionine + A + S-adenosyl-L-homocysteine + 2 H(+). Functionally, catalyzes the methylthiolation of an aspartic acid residue of ribosomal protein uS12. The polypeptide is Ribosomal protein uS12 methylthiotransferase RimO (Alkaliphilus oremlandii (strain OhILAs) (Clostridium oremlandii (strain OhILAs))).